We begin with the raw amino-acid sequence, 183 residues long: Transmembrane protein 252 (183 aa).

The next 2 helical transmembrane spans lie at Ile8–Ile28 and Leu39–Trp59.

The protein localises to the membrane. In Mus musculus (Mouse), this protein is Transmembrane protein 252 (Tmem252).